Here is a 468-residue protein sequence, read N- to C-terminus: Glutamate--tRNA ligase 2 (468 aa).

The short motif at 13–23 (PSPTGYLHIGG) is the 'HIGH' region element. The 'KMSKS' region signature appears at 241 to 245 (KLSKR). Lys-244 provides a ligand contact to ATP.

This sequence belongs to the class-I aminoacyl-tRNA synthetase family. Glutamate--tRNA ligase type 1 subfamily. As to quaternary structure, monomer.

It localises to the cytoplasm. It carries out the reaction tRNA(Glu) + L-glutamate + ATP = L-glutamyl-tRNA(Glu) + AMP + diphosphate. Catalyzes the attachment of glutamate to tRNA(Glu) in a two-step reaction: glutamate is first activated by ATP to form Glu-AMP and then transferred to the acceptor end of tRNA(Glu). This Paracoccus denitrificans (strain Pd 1222) protein is Glutamate--tRNA ligase 2.